A 91-amino-acid chain; its full sequence is CRISPR-associated endoribonuclease Cas2 2 (91 aa).

D10 lines the Mg(2+) pocket.

Belongs to the CRISPR-associated endoribonuclease Cas2 protein family. In terms of assembly, homodimer, forms a heterotetramer with a Cas1 homodimer. It depends on Mg(2+) as a cofactor.

In terms of biological role, CRISPR (clustered regularly interspaced short palindromic repeat), is an adaptive immune system that provides protection against mobile genetic elements (viruses, transposable elements and conjugative plasmids). CRISPR clusters contain sequences complementary to antecedent mobile elements and target invading nucleic acids. CRISPR clusters are transcribed and processed into CRISPR RNA (crRNA). Functions as a ssRNA-specific endoribonuclease. Involved in the integration of spacer DNA into the CRISPR cassette. This is CRISPR-associated endoribonuclease Cas2 2 from Thermodesulfovibrio yellowstonii (strain ATCC 51303 / DSM 11347 / YP87).